The following is a 249-amino-acid chain: Small ribosomal subunit protein uS3 (249 aa).

Residues 23–94 (LNEFFTRELS…TVELYAEKVQ (72 aa)) enclose the KH type-2 domain. Phosphoserine is present on residues S32, S37, S106, and S141.

The protein belongs to the universal ribosomal protein uS3 family. As to quaternary structure, component of the small ribosomal subunit (SSU). Mature yeast ribosomes consist of a small (40S) and a large (60S) subunit. The 40S small subunit contains 1 molecule of ribosomal RNA (18S rRNA) and at least 33 different proteins. The large 60S subunit contains 3 rRNA molecules (25S, 5.8S and 5S rRNA) and at least 46 different proteins.

It is found in the cytoplasm. Component of the ribosome, a large ribonucleoprotein complex responsible for the synthesis of proteins in the cell. The small ribosomal subunit (SSU) binds messenger RNAs (mRNAs) and translates the encoded message by selecting cognate aminoacyl-transfer RNA (tRNA) molecules. The large subunit (LSU) contains the ribosomal catalytic site termed the peptidyl transferase center (PTC), which catalyzes the formation of peptide bonds, thereby polymerizing the amino acids delivered by tRNAs into a polypeptide chain. The nascent polypeptides leave the ribosome through a tunnel in the LSU and interact with protein factors that function in enzymatic processing, targeting, and the membrane insertion of nascent chains at the exit of the ribosomal tunnel. The sequence is that of Small ribosomal subunit protein uS3 (rps3) from Schizosaccharomyces pombe (strain 972 / ATCC 24843) (Fission yeast).